The primary structure comprises 735 residues: Ribosomal protein S6 kinase alpha-1 (735 aa).

A Phosphoserine modification is found at serine 54. The 260-residue stretch at 62 to 321 (FELLKVLGQG…AEEIKRHVFY (260 aa)) folds into the Protein kinase 1 domain. ATP is bound by residues 68–76 (LGQGSFGKV) and lysine 94. The active-site Proton acceptor is aspartate 187. Phosphoserine; by PDPK1 is present on serine 221. Serine 307 carries the post-translational modification Phosphoserine. The AGC-kinase C-terminal domain maps to 322–391 (STIDWNKLYR…VATGLMEDDG (70 aa)). Residue threonine 359 is modified to Phosphothreonine. Residues serine 363 and serine 369 each carry the phosphoserine modification. At serine 380 the chain carries Phosphoserine; by autocatalysis. The region spanning 418 to 675 (YVVKETIGVG…AKQVLQHPWV (258 aa)) is the Protein kinase 2 domain. ATP contacts are provided by residues 424–432 (IGVGSYSEC) and lysine 447. The active-site Proton acceptor is the aspartate 535. At threonine 573 the chain carries Phosphothreonine. The residue at position 732 (serine 732) is a Phosphoserine.

This sequence belongs to the protein kinase superfamily. AGC Ser/Thr protein kinase family. S6 kinase subfamily. As to quaternary structure, forms a complex with either MAPK1/ERK2 or MAPK3/ERK1 in quiescent cells. Transiently dissociates following mitogenic stimulation. Interacts with ETV1/ER81 and FGFR1. In terms of assembly, (Microbial infection) Interacts with Kaposi's sarcoma-associated herpesvirus/HHV-8 protein ORF45; this interaction allows RPS6KA1 activation. Requires Mg(2+) as cofactor. In terms of processing, activated by phosphorylation at Ser-221 by PDPK1. Autophosphorylated on Ser-380, as part of the activation process. May be phosphorylated at Thr-359 and Ser-363 by MAPK1/ERK2 and MAPK3/ERK1. Post-translationally, N-terminal myristoylation results in an activated kinase in the absence of added growth factors.

It is found in the nucleus. The protein localises to the cytoplasm. The catalysed reaction is L-seryl-[protein] + ATP = O-phospho-L-seryl-[protein] + ADP + H(+). It catalyses the reaction L-threonyl-[protein] + ATP = O-phospho-L-threonyl-[protein] + ADP + H(+). Upon extracellular signal or mitogen stimulation, phosphorylated at Thr-573 in the C-terminal kinase domain (CTKD) by MAPK1/ERK2 and MAPK3/ERK1. The activated CTKD then autophosphorylates Ser-380, allowing binding of PDPK1, which in turn phosphorylates Ser-221 in the N-terminal kinase domain (NTDK) leading to the full activation of the protein and subsequent phosphorylation of the substrates by the NTKD. Its function is as follows. Serine/threonine-protein kinase that acts downstream of ERK (MAPK1/ERK2 and MAPK3/ERK1) signaling and mediates mitogenic and stress-induced activation of the transcription factors CREB1, ETV1/ER81 and NR4A1/NUR77, regulates translation through RPS6 and EIF4B phosphorylation, and mediates cellular proliferation, survival, and differentiation by modulating mTOR signaling and repressing pro-apoptotic function of BAD and DAPK1. In fibroblast, is required for EGF-stimulated phosphorylation of CREB1, which results in the subsequent transcriptional activation of several immediate-early genes. In response to mitogenic stimulation (EGF and PMA), phosphorylates and activates NR4A1/NUR77 and ETV1/ER81 transcription factors and the cofactor CREBBP. Upon insulin-derived signal, acts indirectly on the transcription regulation of several genes by phosphorylating GSK3B at 'Ser-9' and inhibiting its activity. Phosphorylates RPS6 in response to serum or EGF via an mTOR-independent mechanism and promotes translation initiation by facilitating assembly of the pre-initiation complex. In response to insulin, phosphorylates EIF4B, enhancing EIF4B affinity for the EIF3 complex and stimulating cap-dependent translation. Is involved in the mTOR nutrient-sensing pathway by directly phosphorylating TSC2 at 'Ser-1798', which potently inhibits TSC2 ability to suppress mTOR signaling, and mediates phosphorylation of RPTOR, which regulates mTORC1 activity and may promote rapamycin-sensitive signaling independently of the PI3K/AKT pathway. Also involved in feedback regulation of mTORC1 and mTORC2 by phosphorylating DEPTOR. Mediates cell survival by phosphorylating the pro-apoptotic proteins BAD and DAPK1 and suppressing their pro-apoptotic function. Promotes the survival of hepatic stellate cells by phosphorylating CEBPB in response to the hepatotoxin carbon tetrachloride (CCl4). Mediates induction of hepatocyte prolifration by TGFA through phosphorylation of CEBPB. Is involved in cell cycle regulation by phosphorylating the CDK inhibitor CDKN1B, which promotes CDKN1B association with 14-3-3 proteins and prevents its translocation to the nucleus and inhibition of G1 progression. Phosphorylates EPHA2 at 'Ser-897', the RPS6KA-EPHA2 signaling pathway controls cell migration. In response to mTORC1 activation, phosphorylates EIF4B at 'Ser-406' and 'Ser-422' which stimulates bicarbonate cotransporter SLC4A7 mRNA translation, increasing SLC4A7 protein abundance and function. In terms of biological role, (Microbial infection) Promotes the late transcription and translation of viral lytic genes during Kaposi's sarcoma-associated herpesvirus/HHV-8 infection, when constitutively activated. In Homo sapiens (Human), this protein is Ribosomal protein S6 kinase alpha-1 (RPS6KA1).